The primary structure comprises 221 residues: Triosephosphate isomerase (221 aa).

8–10 is a substrate binding site; that stretch reads NLK. His-92 serves as the catalytic Electrophile. Glu-140 acts as the Proton acceptor in catalysis. Residues Ile-145, Gly-180, and 201 to 202 contribute to the substrate site; that span reads AS.

This sequence belongs to the triosephosphate isomerase family. In terms of assembly, homotetramer; dimer of dimers.

It localises to the cytoplasm. The catalysed reaction is D-glyceraldehyde 3-phosphate = dihydroxyacetone phosphate. It functions in the pathway carbohydrate biosynthesis; gluconeogenesis. Its pathway is carbohydrate degradation; glycolysis; D-glyceraldehyde 3-phosphate from glycerone phosphate: step 1/1. Functionally, involved in the gluconeogenesis. Catalyzes stereospecifically the conversion of dihydroxyacetone phosphate (DHAP) to D-glyceraldehyde-3-phosphate (G3P). This is Triosephosphate isomerase from Methanococcoides burtonii (strain DSM 6242 / NBRC 107633 / OCM 468 / ACE-M).